A 146-amino-acid chain; its full sequence is Superoxide dismutase [Mn] 2 (146 aa).

Mn(2+) contacts are provided by histidine 42, aspartate 126, and histidine 130.

It belongs to the iron/manganese superoxide dismutase family. Requires Mn(2+) as cofactor.

It carries out the reaction 2 superoxide + 2 H(+) = H2O2 + O2. In terms of biological role, destroys superoxide anion radicals which are normally produced within the cells and which are toxic to biological systems. The protein is Superoxide dismutase [Mn] 2 (sod2) of Haloferax mediterranei (Halobacterium mediterranei).